We begin with the raw amino-acid sequence, 275 residues long: Large ribosomal subunit protein uL2 (275 aa).

Residues 223–275 (VVMNPVDHPHGGGEGKSSGGRHPVSPWGMPTKGYKTRKNKGTDQYIVRRRNKK) form a disordered region.

It belongs to the universal ribosomal protein uL2 family. Part of the 50S ribosomal subunit. Forms a bridge to the 30S subunit in the 70S ribosome.

Functionally, one of the primary rRNA binding proteins. Required for association of the 30S and 50S subunits to form the 70S ribosome, for tRNA binding and peptide bond formation. It has been suggested to have peptidyltransferase activity; this is somewhat controversial. Makes several contacts with the 16S rRNA in the 70S ribosome. The chain is Large ribosomal subunit protein uL2 from Psychromonas ingrahamii (strain DSM 17664 / CCUG 51855 / 37).